A 341-amino-acid polypeptide reads, in one-letter code: Probable 2' cyclic ADP-D-ribose synthase TcpO (341 aa).

In terms of domain architecture, TIR spans 204-336 (KEYDIFVSHS…EIIHEILERI (133 aa)). Residues 213–214 (SS) and Lys-243 contribute to the NAD(+) site. Residue Glu-279 is part of the active site.

The catalysed reaction is NAD(+) + H2O = ADP-D-ribose + nicotinamide + H(+). It catalyses the reaction NAD(+) = 2'cADPR + nicotinamide + H(+). NAD(+) hydrolase (NADase) that catalyzes cleavage of NAD(+) into ADP-D-ribose (ADPR) and nicotinamide. In addition to ADPR, also generates a cyclization variant of cyclic ADPR (cADPR), termed v-cADPR (probably 2'cADPR). The chain is Probable 2' cyclic ADP-D-ribose synthase TcpO from Methanobrevibacter olleyae.